An 813-amino-acid chain; its full sequence is Protein tramtrack, alpha isoform (813 aa).

Positions 33–98 (TDVTLAVEGQ…MYRGEVSVDQ (66 aa)) constitute a BTB domain. Disordered stretches follow at residues 118-148 (EVNDDKPSPAAAAAGAGATGSESTATTPQLQ), 171-324 (ANAG…GPSE), 356-428 (TTPA…MPKK), and 526-585 (AGLP…LDDQ). Over residues 125 to 145 (SPAAAAAGAGATGSESTATTP) the composition is skewed to low complexity. Positions 176 to 187 (TPTLPVQPSLLS) are enriched in polar residues. Residues 192 to 201 (PKRKRGRPRK) are compositionally biased toward basic residues. Residues serine 203, serine 205, and serine 206 each carry the phosphoserine modification. The residue at position 209 (threonine 209) is a Phosphothreonine. The segment covering 254-285 (HTDDLNESRDSLPSKRSKNSKDHRVVSHHEDN) has biased composition (basic and acidic residues). Polar residues-rich tracts occupy residues 302 to 324 (LFGSSSTTISATAPGGSSTGPSE), 356 to 369 (TTPAQQGSPQTPTK), and 377 to 388 (ATGSNNSNSLLK). The segment covering 560–578 (SGKKGAKRPIQRRRVRRKA) has biased composition (basic residues). 2 C2H2-type zinc fingers span residues 610–638 (YRCTECAKENMQKTFKNKYSFQRHAFLYH) and 646–669 (FPCPVCSKEFSRPDKMKNHLKMTH). Serine 682 is modified (phosphoserine).

As to quaternary structure, interacts with CoRest/CG33525, suggesting that it acts by recruiting a CoRest-containing corepressor complex. Interacts with phyl.

The protein localises to the nucleus. Binds to a number of sites in the transcriptional regulatory region of ftz. Isoform alpha is required to repress genes that promote the R7 cell fate. Probable repressor of the transcription of the segmentation genes ftz, eve, h, odd, run, and en. May bind to the region 5'-AGGG[CT]GG-3'. Degradation of ttk is directed by binding of sinah or sina, via the adapter molecule phyl which binds to the BTB domain of ttk. This chain is Protein tramtrack, alpha isoform (ttk), found in Drosophila melanogaster (Fruit fly).